Here is a 218-residue protein sequence, read N- to C-terminus: Pyridoxine/pyridoxamine 5'-phosphate oxidase (218 aa).

Substrate contacts are provided by residues Arg14–Tyr17 and Lys72. FMN contacts are provided by residues Arg67–Lys72, Tyr82–Thr83, Arg88, Lys89, and Gln111. The substrate site is built by Tyr129, Arg133, and Ser137. FMN-binding positions include Gln146 to Ser147 and Trp191. Position 197–199 (Arg197–His199) interacts with substrate. Arg201 is an FMN binding site.

This sequence belongs to the pyridoxamine 5'-phosphate oxidase family. Homodimer. FMN serves as cofactor.

The catalysed reaction is pyridoxamine 5'-phosphate + O2 + H2O = pyridoxal 5'-phosphate + H2O2 + NH4(+). The enzyme catalyses pyridoxine 5'-phosphate + O2 = pyridoxal 5'-phosphate + H2O2. The protein operates within cofactor metabolism; pyridoxal 5'-phosphate salvage; pyridoxal 5'-phosphate from pyridoxamine 5'-phosphate: step 1/1. It functions in the pathway cofactor metabolism; pyridoxal 5'-phosphate salvage; pyridoxal 5'-phosphate from pyridoxine 5'-phosphate: step 1/1. In terms of biological role, catalyzes the oxidation of either pyridoxine 5'-phosphate (PNP) or pyridoxamine 5'-phosphate (PMP) into pyridoxal 5'-phosphate (PLP). This is Pyridoxine/pyridoxamine 5'-phosphate oxidase from Salmonella typhi.